The sequence spans 458 residues: Transmembrane protein 143 (458 aa).

A run of 2 helical transmembrane segments spans residues 277-297 (LLNL…GMVI) and 298-318 (LSDL…FMGV). Serine 329 carries the post-translational modification Phosphoserine.

It localises to the membrane. The polypeptide is Transmembrane protein 143 (Tmem143) (Mus musculus (Mouse)).